Here is a 148-residue protein sequence, read N- to C-terminus: uncharacterized protein (148 aa).

Positions 36-45 (PGAPSAGPMS) are enriched in low complexity. Residues 36–148 (PGAPSAGPMS…SGTAFFPGTT (113 aa)) form a disordered region. The segment covering 46–55 (DSNSKGSTPR) has biased composition (polar residues).

This is an uncharacterized protein from Bovine leukemia virus (isolate Japanese BLV-1) (BLV).